Here is a 1143-residue protein sequence, read N- to C-terminus: FH2 domain-containing protein 1 (1143 aa).

The tract at residues 16–89 (GNIATAPGFM…PPTTHMNGYS (74 aa)) is disordered. Pro residues-rich tracts occupy residues 29–46 (TPPP…PSPP) and 56–80 (SSPP…PGLP). Positions 87 to 482 (GYSHLGKKKR…QLQRLKEQEQ (396 aa)) constitute an FH2 domain. Ser500 is modified (phosphoserine). The interval 517-638 (PFLHPRPISP…NHASAFPRAR (122 aa)) is disordered. The segment covering 521–534 (PRPISPSSPSYRPP) has biased composition (low complexity). Residues Ser650, Ser660, and Ser664 each carry the phosphoserine modification. Residues 706-1143 (LESVGHRGPQ…LGRILNPLRK (438 aa)) form a disordered region. Over residues 806–818 (GSMSSGVGEMGDS) the composition is skewed to low complexity. Basic and acidic residues predominate over residues 848–861 (LPRDKPTKRKDVVA). Polar residues predominate over residues 925-947 (RGPSQNPPSSTDTVWSRQNSVRR). Over residues 958–968 (PRGSSGSSSTR) the composition is skewed to low complexity. Residues 960-1086 (GSSGSSSTRP…DAAPKDSSTL (127 aa)) are MTBD; microtubule-binding domain. Residues 995 to 1018 (QKPEENKTCRAHSEGPESPKEEPK) are compositionally biased toward basic and acidic residues. A compositionally biased stretch (polar residues) spans 1036 to 1046 (ARNTVASSSRS). 2 stretches are compositionally biased toward basic and acidic residues: residues 1071–1080 (VKGDPEDAAP) and 1117–1130 (GAGE…KDSS).

In terms of assembly, interacts with CEP170.

The protein localises to the cell projection. Its subcellular location is the cilium. It is found in the golgi apparatus. Functionally, microtubule-associated formin which regulates both actin and microtubule dynamics. Induces microtubule acetylation and stabilization and actin stress fiber formation. Regulates Golgi ribbon formation. Required for normal cilia assembly. Early in cilia assembly, may assist in the maturation and positioning of the centrosome/basal body, and once cilia assembly has initiated, may also promote cilia elongation by inhibiting disassembly. This is FH2 domain-containing protein 1 (FHDC1) from Homo sapiens (Human).